A 733-amino-acid chain; its full sequence is LMBR1 domain-containing protein 2 homolog A (733 aa).

5 helical membrane passes run 1–21 (MIVIFIFILIAVGLLSTKILH), 33–53 (VYISVWIGWFMCFSIVILVPI), 125–145 (FYFGTLLLTWLVYPLMGSFVL), 163–183 (AYLYLIFGVIGLVVMIWLLAV), and 191–211 (MVGFAMAAANTWGLCLVIILM). Residues 232–266 (LKHLQFKAVELLNSKKKANEELIATMKVIRRIQEK) adopt a coiled-coil conformation. Transmembrane regions (helical) follow at residues 386–406 (AAIVFAVLSLLIIWSEFALAF), 423–443 (VSNIFVQFILFFPLGYEALTC), 468–488 (SIIFSAAYLCRLGAPLCYNFI), and 513–533 (VAPFLGTYFYIYFPLLIVIVC). Disordered regions lie at residues 581–641 (NNIK…TSSA), 649–668 (LKKSSNNNNNNNNNNNPYEQ), and 674–696 (ESNDFDDDDDIESGGAGRPTYNA). Positions 596-619 (DSTSNNPKQIFKSGSTTISKQSPP) are enriched in polar residues. Low complexity-rich tracts occupy residues 620–640 (NLNVSGGNINNNNTNNGNTSS) and 654–664 (NNNNNNNNNNN). Residues 674–685 (ESNDFDDDDDIE) show a composition bias toward acidic residues.

The protein belongs to the LIMR family.

It localises to the membrane. This chain is LMBR1 domain-containing protein 2 homolog A, found in Dictyostelium discoideum (Social amoeba).